Reading from the N-terminus, the 215-residue chain is Heart- and neural crest derivatives-expressed protein 1 (215 aa).

Disordered regions lie at residues 53-109 and 166-198; these read APDF…RTES and LKKA…EKRI. Residues 65 to 89 are compositionally biased toward low complexity; the sequence is AAAAATAYGPDARPGQSPGRLEALG. Positions 92–104 are enriched in basic residues; sequence LGRRKGSGPKKER. In terms of domain architecture, bHLH spans 94–146; the sequence is RRKGSGPKKERRRTESINSAFAELRECIPNVPADTKLSKIKTLRLATSYIAYL. Residue T107 is modified to Phosphothreonine; by PLK4. The residue at position 109 (S109) is a Phosphoserine; by PLK4.

In terms of assembly, efficient DNA binding requires dimerization with another bHLH protein. Forms homodimers and heterodimers with TCF3 gene products E12 and E47, HAND2 and HEY1, HEY2 and HEYL (hairy-related transcription factors). Interacts with MDFIC. Interacts with SOX15; the interaction enhances HAND1-induced differentiation of trophoblast giant cells. Post-translationally, phosphorylation by PLK4 disrupts the interaction with MDFIC and leads to translocation into the nucleoplasm, allowing dimerization and transcription factor activity. Heart.

Its subcellular location is the nucleus. It localises to the nucleoplasm. The protein localises to the nucleolus. In terms of biological role, transcription factor that plays an essential role in both trophoblast giant cell differentiation and in cardiac morphogenesis. Binds the DNA sequence 5'-NRTCTG-3' (non-canonical E-box). Acts as a transcriptional repressor of SOX15. In the adult, could be required for ongoing expression of cardiac-specific genes. This chain is Heart- and neural crest derivatives-expressed protein 1 (HAND1), found in Homo sapiens (Human).